The chain runs to 144 residues: Large ribosomal subunit protein uL16 (144 aa).

Basic residues predominate over residues 1–19; that stretch reads MLLPKRVKYRRQHRPKTTG. A disordered region spans residues 1–23; it reads MLLPKRVKYRRQHRPKTTGRSKG.

This sequence belongs to the universal ribosomal protein uL16 family. In terms of assembly, part of the 50S ribosomal subunit.

Its function is as follows. Binds 23S rRNA and is also seen to make contacts with the A and possibly P site tRNAs. The sequence is that of Large ribosomal subunit protein uL16 from Staphylococcus haemolyticus (strain JCSC1435).